An 823-amino-acid chain; its full sequence is MDNTYNPQEVEEQAQQYWHKKQSFNVTEDLNKEKFYCLSMFPYPSGTLHMGHVRNYTLGDVIARYQRALGKNVLQPIGWDAFGLPAENAAIKNKIPPAEWTRKNIAAMKEQFLRLGNAYDWKRELTTCDPEYYRWEQWFFIRLFEKGLVYKKNAVVNWDPVDQTVLANEQVVDGRGWRSGALVERKEISQWFIKITSYADELLSSLDSLDEWPAQVKQMQRNWIGKSIGTEIYFNVNNYPKRLKIYTTRPDTLMGATYLAVATDHPLAKEAASNNKKVQEFLDSCQGIKIAEAELATMEKRGIDTGMTAIHPITGKELPIWVANFVLMQYGSGAVMAVPAHDQRDWEFAQKYQLPVKQVIKPIDIEHDFNQSAYTEEGILINSNQFDNLLSSKAIQVITNFLEENDAGKATINYRLRDWGVSRQRYWGTPIPMIICEQCGIVPVPDEELPVVLPENVDFTGTGSPLTQCKEFVNVTCPKCGQDATRETDTFDTFVESSWYYARFACKGQENAMLDDRAKYWTPVDQYIGGIEHAVMHLLYARFFHKLMRDEGLVNSDEPFKALLTQGMVLKDGHKMSKSLGNVVDPNHLINTYGADTARLFVMFASPPEQSLEWSDSGVEGAHRFLKRVWAFSHQHRDMLIDINDSILSGNGHVDWKEAESRLKKSRHIVHQILAQATHDYDRNQFNTVVSGCMKLFNEISDYSIETENDKFFIHSSISILLRLLAPITPHICHCLWQQLGFDKAIIDAPWPKVDKSALKTDEVDYVVQVNGKLRAQFTASTDATEEELIAAAKEHAHNFVVNHTIKKAIIVPHRQLINLVIG.

Positions 42–52 match the 'HIGH' region motif; it reads PYPSGTLHMGH. The 'KMSKS' region signature appears at 575 to 579; sequence KMSKS. Lys-578 is an ATP binding site.

This sequence belongs to the class-I aminoacyl-tRNA synthetase family.

It localises to the cytoplasm. It carries out the reaction tRNA(Leu) + L-leucine + ATP = L-leucyl-tRNA(Leu) + AMP + diphosphate. This is Leucine--tRNA ligase from Legionella pneumophila (strain Corby).